The primary structure comprises 119 residues: Protein TusC (119 aa).

It belongs to the DsrF/TusC family. In terms of assembly, heterohexamer, formed by a dimer of trimers. The hexameric TusBCD complex contains 2 copies each of TusB, TusC and TusD. The TusBCD complex interacts with TusE.

It localises to the cytoplasm. In terms of biological role, part of a sulfur-relay system required for 2-thiolation of 5-methylaminomethyl-2-thiouridine (mnm(5)s(2)U) at tRNA wobble positions. This chain is Protein TusC, found in Escherichia coli O45:K1 (strain S88 / ExPEC).